Reading from the N-terminus, the 94-residue chain is Cystatin-A1 (94 aa).

Residues Gln45 to Gly49 carry the Secondary area of contact motif.

It belongs to the cystatin family.

Its subcellular location is the cytoplasm. In terms of biological role, intracellular thiol proteinase inhibitor. Inhibits papain, but not cathepsin B. This Dictyostelium discoideum (Social amoeba) protein is Cystatin-A1 (cpiA).